A 346-amino-acid chain; its full sequence is Putative agmatine deiminase (346 aa).

Catalysis depends on Cys333, which acts as the Amidino-cysteine intermediate.

This sequence belongs to the agmatine deiminase family.

The catalysed reaction is agmatine + H2O = N-carbamoylputrescine + NH4(+). This chain is Putative agmatine deiminase, found in Legionella pneumophila (strain Paris).